The primary structure comprises 500 residues: Aspartyl/glutamyl-tRNA(Asn/Gln) amidotransferase subunit B (500 aa).

It belongs to the GatB/GatE family. GatB subfamily. Heterotrimer of A, B and C subunits.

It catalyses the reaction L-glutamyl-tRNA(Gln) + L-glutamine + ATP + H2O = L-glutaminyl-tRNA(Gln) + L-glutamate + ADP + phosphate + H(+). The catalysed reaction is L-aspartyl-tRNA(Asn) + L-glutamine + ATP + H2O = L-asparaginyl-tRNA(Asn) + L-glutamate + ADP + phosphate + 2 H(+). Functionally, allows the formation of correctly charged Asn-tRNA(Asn) or Gln-tRNA(Gln) through the transamidation of misacylated Asp-tRNA(Asn) or Glu-tRNA(Gln) in organisms which lack either or both of asparaginyl-tRNA or glutaminyl-tRNA synthetases. The reaction takes place in the presence of glutamine and ATP through an activated phospho-Asp-tRNA(Asn) or phospho-Glu-tRNA(Gln). The polypeptide is Aspartyl/glutamyl-tRNA(Asn/Gln) amidotransferase subunit B (Rhizobium etli (strain CIAT 652)).